The following is a 379-amino-acid chain: Anhydro-N-acetylmuramic acid kinase (379 aa).

9–16 contributes to the ATP binding site; it reads GTSADGVD.

It belongs to the anhydro-N-acetylmuramic acid kinase family.

It carries out the reaction 1,6-anhydro-N-acetyl-beta-muramate + ATP + H2O = N-acetyl-D-muramate 6-phosphate + ADP + H(+). The protein operates within amino-sugar metabolism; 1,6-anhydro-N-acetylmuramate degradation. It participates in cell wall biogenesis; peptidoglycan recycling. In terms of biological role, catalyzes the specific phosphorylation of 1,6-anhydro-N-acetylmuramic acid (anhMurNAc) with the simultaneous cleavage of the 1,6-anhydro ring, generating MurNAc-6-P. Is required for the utilization of anhMurNAc either imported from the medium or derived from its own cell wall murein, and thus plays a role in cell wall recycling. The polypeptide is Anhydro-N-acetylmuramic acid kinase (Synechococcus sp. (strain CC9605)).